The sequence spans 600 residues: Chaperonin 60 subunit beta 1, chloroplastic (600 aa).

The span at Met-1–Gly-12 shows a compositional bias: polar residues. The tract at residues Met-1–Asp-23 is disordered. The transit peptide at Met-1–Cys-54 directs the protein to the chloroplast. Ser-101 and Ser-478 each carry phosphoserine.

It belongs to the chaperonin (HSP60) family. As to quaternary structure, part of the Cpn60 complex composed of 7 alpha and 7 beta subunits. Can also form a complex composed of 14 beta subunits only. Both complexes show ATPase activity. The Cpn60 complex interacts with the Cpn10 complex. Interacts with RAB during heat stress. As to expression, expressed in leaves, stems, petioles and flowers.

It is found in the plastid. Its subcellular location is the chloroplast stroma. In terms of biological role, binds RuBisCO small and large subunits and is implicated in the assembly of the enzyme oligomer. Involved in protein assisted folding. Required for proper plastid division. In Arabidopsis thaliana (Mouse-ear cress), this protein is Chaperonin 60 subunit beta 1, chloroplastic (CPN60B1).